The following is a 148-amino-acid chain: MFRGVATVSLDSKNRLVVPARYRDALLVNGAGRVVVTADPGQCLLLYPLPEWEPIEKKLTALSDFNPRTRSLKQLLVGYAHDIDMDSAGRVLLPPMLRKFAELDKNVVLVGQGSKVELWNEARWEAQVAQALSFSQEALPSELEGFTL.

SpoVT-AbrB domains follow at residues 5–51 (VATV…PLPE) and 80–123 (AHDI…NEAR).

Belongs to the MraZ family. Forms oligomers.

The protein localises to the cytoplasm. It localises to the nucleoid. The chain is Transcriptional regulator MraZ from Thiobacillus denitrificans (strain ATCC 25259 / T1).